We begin with the raw amino-acid sequence, 461 residues long: uncharacterized protein (461 aa).

2 disordered regions span residues 254–273 and 368–414; these read NNNNNNNNNNNNNNNNNNNN and QPSQ…NNNS. The span at 381–413 shows a compositional bias: low complexity; that stretch reads NNNNNNNNNNNNNNNNNNNNNNNNNNNNNNNNN.

This is an uncharacterized protein from Dictyostelium discoideum (Social amoeba).